Reading from the N-terminus, the 282-residue chain is MQIVRNIDDLRQEVAKLRISGAPVALVPTMGALHRGHVALVDAARSRGCEVVVSIFVNPTQFGPSEDLDAYPRREAADAAMLDGAGATLLWAPDVATMYPPGFATSISVGGVSERWDGAARPGHFAGVATVVTKLFQQVKPDIAFFGEKDFQQLAVIRRFVADLDIDIEIVGVPTQRDDDGLALSSRNAYLSPEERVTARTLPRALGEAAAAIGRGGDVAAALAAAIARLAEAGFDPIDYVALVDAASLEPIDRLDGPARLIAAARLGGTRLIDNLAVEPAP.

30-37 contributes to the ATP binding site; the sequence is MGALHRGH. Residue H37 is the Proton donor of the active site. Q61 lines the (R)-pantoate pocket. A beta-alanine-binding site is contributed by Q61. ATP is bound at residue 147 to 150; that stretch reads GEKD. Q153 serves as a coordination point for (R)-pantoate. Residue 184–187 coordinates ATP; that stretch reads LSSR.

Belongs to the pantothenate synthetase family. In terms of assembly, homodimer.

The protein localises to the cytoplasm. The catalysed reaction is (R)-pantoate + beta-alanine + ATP = (R)-pantothenate + AMP + diphosphate + H(+). The protein operates within cofactor biosynthesis; (R)-pantothenate biosynthesis; (R)-pantothenate from (R)-pantoate and beta-alanine: step 1/1. Catalyzes the condensation of pantoate with beta-alanine in an ATP-dependent reaction via a pantoyl-adenylate intermediate. The chain is Pantothenate synthetase from Rhizorhabdus wittichii (strain DSM 6014 / CCUG 31198 / JCM 15750 / NBRC 105917 / EY 4224 / RW1) (Sphingomonas wittichii).